The following is a 327-amino-acid chain: Lipoyl synthase (327 aa).

The [4Fe-4S] cluster site is built by Cys-66, Cys-71, Cys-77, Cys-92, Cys-96, Cys-99, and Ser-306. The 218-residue stretch at 78 to 295 (FSKGTATFMI…EKEAYELGFS (218 aa)) folds into the Radical SAM core domain.

This sequence belongs to the radical SAM superfamily. Lipoyl synthase family. [4Fe-4S] cluster serves as cofactor.

The protein localises to the cytoplasm. The catalysed reaction is [[Fe-S] cluster scaffold protein carrying a second [4Fe-4S](2+) cluster] + N(6)-octanoyl-L-lysyl-[protein] + 2 oxidized [2Fe-2S]-[ferredoxin] + 2 S-adenosyl-L-methionine + 4 H(+) = [[Fe-S] cluster scaffold protein] + N(6)-[(R)-dihydrolipoyl]-L-lysyl-[protein] + 4 Fe(3+) + 2 hydrogen sulfide + 2 5'-deoxyadenosine + 2 L-methionine + 2 reduced [2Fe-2S]-[ferredoxin]. The protein operates within protein modification; protein lipoylation via endogenous pathway; protein N(6)-(lipoyl)lysine from octanoyl-[acyl-carrier-protein]: step 2/2. In terms of biological role, catalyzes the radical-mediated insertion of two sulfur atoms into the C-6 and C-8 positions of the octanoyl moiety bound to the lipoyl domains of lipoate-dependent enzymes, thereby converting the octanoylated domains into lipoylated derivatives. This is Lipoyl synthase from Neisseria meningitidis serogroup A / serotype 4A (strain DSM 15465 / Z2491).